We begin with the raw amino-acid sequence, 571 residues long: Sulfite reductase [NADPH] hemoprotein beta-component (571 aa).

[4Fe-4S] cluster is bound by residues Cys-436, Cys-442, Cys-481, and Cys-485. Siroheme is bound at residue Cys-485.

This sequence belongs to the nitrite and sulfite reductase 4Fe-4S domain family. As to quaternary structure, alpha(8)-beta(8). The alpha component is a flavoprotein, the beta component is a hemoprotein. Requires siroheme as cofactor. [4Fe-4S] cluster is required as a cofactor.

The enzyme catalyses hydrogen sulfide + 3 NADP(+) + 3 H2O = sulfite + 3 NADPH + 4 H(+). It functions in the pathway sulfur metabolism; hydrogen sulfide biosynthesis; hydrogen sulfide from sulfite (NADPH route): step 1/1. Component of the sulfite reductase complex that catalyzes the 6-electron reduction of sulfite to sulfide. This is one of several activities required for the biosynthesis of L-cysteine from sulfate. The sequence is that of Sulfite reductase [NADPH] hemoprotein beta-component (cysI) from Bacillus subtilis (strain 168).